The sequence spans 253 residues: 5-oxoprolinase subunit A (253 aa).

Belongs to the LamB/PxpA family. As to quaternary structure, forms a complex composed of PxpA, PxpB and PxpC.

It catalyses the reaction 5-oxo-L-proline + ATP + 2 H2O = L-glutamate + ADP + phosphate + H(+). Its function is as follows. Catalyzes the cleavage of 5-oxoproline to form L-glutamate coupled to the hydrolysis of ATP to ADP and inorganic phosphate. The polypeptide is 5-oxoprolinase subunit A (Bacillus licheniformis (strain ATCC 14580 / DSM 13 / JCM 2505 / CCUG 7422 / NBRC 12200 / NCIMB 9375 / NCTC 10341 / NRRL NRS-1264 / Gibson 46)).